A 957-amino-acid polypeptide reads, in one-letter code: MIEKTYQPADIEARISRAWEDAEAFKAGRPERRDAVPYSIVIPPPNVTGSLHMGHALNNTLQDILCRFERMRGRDVLWQPGTDHAGIATQMVVERQLMERQEPSRRDMGRAKFLERVWQWKAESGGVIVNQLKRLGASCDWSRERFTMDEGLSRAVAKVFVELHRQGLIYKDKRLVNWDPKLLTAISDLEVQQIEVKGNLWHLRYPIEGKTFDPADPSSFIVVATTRPETMLGDSAVAVNPEDERYTHLVGKHVILPLVGRRIPIVADEYSDPEKGSGAVKITPAHDFNDFEVGKRHHLPQINVLDIEGKISVADNSAYLEGLPEGAREFAGEIDGTDRFVARKIIVARLDDFGFLEKIEPNVHMVPHGDRSGVVIEPFLTDQWYVDAKTLAQPAIAAVRSGETTFVPKNWEKTYFEWMENIQPWCISRQLWWGHQIPAWYGPDGKVFVAETEEEAVGNALGYYVEQEVITPAQAHDMAEDPAKREGFITRDEDVLDTWFSSALWPFSTLGWPDETPELDRYYPTNVLVTGFDIIFFWVARMMMMGLHFMDDVPFPTVYIHALVRDEKGAKMSKSKGNVIDPLNLIDEYGADALRFTLAAMAAQGRDIKLATSRVEGYRNFATKLWNACRFAEMNGCVAPAGFDYTAAKETLNRWIAHETVRAVREVTEAIESYRFNDAAEAAYRFVWNVYCDWYLELAKPVLMGEEGAAKTETRAMVAWARDEILKILHPFMPFITEELWAVTAPRDGLLALAPWSRKGGISDEEVSVLAASAATDPMAGPAMLAIPEPQEPDFTDDAAEAEIGWVVDLVTAIRSVRAEMNIVPSTLTPLVLAGASADTNARASRWSDVIKRLARVGEISFADAAPQGAVQLLVRGEVAALPLKGVVDFAAEQARLEKELGKAEADIKRAEAKLANEKFVANAAEEVVEEEREKREAAVARKVKILEALLRLKNAS.

The 'HIGH' region signature appears at 45-55 (PNVTGSLHMGH). The 'KMSKS' region motif lies at 571-575 (KMSKS). Lys-574 provides a ligand contact to ATP. Residues 887–946 (VVDFAAEQARLEKELGKAEADIKRAEAKLANEKFVANAAEEVVEEEREKREAAVARKVKI) adopt a coiled-coil conformation.

The protein belongs to the class-I aminoacyl-tRNA synthetase family. ValS type 1 subfamily. In terms of assembly, monomer.

Its subcellular location is the cytoplasm. It carries out the reaction tRNA(Val) + L-valine + ATP = L-valyl-tRNA(Val) + AMP + diphosphate. In terms of biological role, catalyzes the attachment of valine to tRNA(Val). As ValRS can inadvertently accommodate and process structurally similar amino acids such as threonine, to avoid such errors, it has a 'posttransfer' editing activity that hydrolyzes mischarged Thr-tRNA(Val) in a tRNA-dependent manner. This is Valine--tRNA ligase from Rhodopseudomonas palustris (strain ATCC BAA-98 / CGA009).